The primary structure comprises 503 residues: MAKLIMVQGTSSNVGKSILVTALCRIFKQDGYKVAPYKSQNMALNAFVTKEGGEIGRAQAVQAEACGIEPSVDMNPILMKPEADSRSQIIVNGKVDRTISAREYYEYAPLLLDTALAALNRLREKNDIVVIEGAGSPAEINLKQREIVNMRIAKEASAPVLLAGDIDRGGVFASLIGTIDLLEPDERYYIKGYLINKFRGDASLLKPAIDVLEDRTSIPVLGIIPYLRNMAIAQEDSVYLDECKGNLGETDLDIAVIRLPRISNYDDFDALATDGASVRFVSKTAEIGNPDLIIIPGTKSTIPDMEYLEQSGLAETIIKKARKGTHVLGVCGGYQILGKMIYDPHKTESETTELKGLGLLDTETTFEKEKATTQISGQVKFDSGLLSGLAGCAVSGYEIHMGRTRLFSAQPAFHITKTPKGPADYLDGASNAEGTVLGTYIHGIFENAAFRRGFLNAIRRHKGIPERQADYFDRDKEYDKLADIVRASIDMEKIYAILNEGIR.

The GATase cobBQ-type domain occupies 251 to 450 (DLDIAVIRLP…IHGIFENAAF (200 aa)). Catalysis depends on Cys331, which acts as the Nucleophile. The active site involves His442.

Belongs to the CobB/CobQ family. CobQ subfamily.

It participates in cofactor biosynthesis; adenosylcobalamin biosynthesis. In terms of biological role, catalyzes amidations at positions B, D, E, and G on adenosylcobyrinic A,C-diamide. NH(2) groups are provided by glutamine, and one molecule of ATP is hydrogenolyzed for each amidation. This chain is Cobyric acid synthase, found in Dehalococcoides mccartyi (strain ATCC BAA-2100 / JCM 16839 / KCTC 5957 / BAV1).